Reading from the N-terminus, the 436-residue chain is Ribulose bisphosphate carboxylase large chain (436 aa).

The substrate site is built by Asn-104 and Thr-154. The active-site Proton acceptor is the Lys-156. Lys-158 serves as a coordination point for substrate. 3 residues coordinate Mg(2+): Lys-182, Asp-184, and Glu-185. Lys-182 is subject to N6-carboxylysine. His-275 functions as the Proton acceptor in the catalytic mechanism. 3 residues coordinate substrate: Arg-276, His-308, and Ser-360.

It belongs to the RuBisCO large chain family. Type I subfamily. In terms of assembly, heterohexadecamer of 8 large chains and 8 small chains; disulfide-linked. The disulfide link is formed within the large subunit homodimers. It depends on Mg(2+) as a cofactor. Post-translationally, the disulfide bond which can form in the large chain dimeric partners within the hexadecamer appears to be associated with oxidative stress and protein turnover.

The protein localises to the plastid. Its subcellular location is the chloroplast. The enzyme catalyses 2 (2R)-3-phosphoglycerate + 2 H(+) = D-ribulose 1,5-bisphosphate + CO2 + H2O. It carries out the reaction D-ribulose 1,5-bisphosphate + O2 = 2-phosphoglycolate + (2R)-3-phosphoglycerate + 2 H(+). Its function is as follows. RuBisCO catalyzes two reactions: the carboxylation of D-ribulose 1,5-bisphosphate, the primary event in carbon dioxide fixation, as well as the oxidative fragmentation of the pentose substrate in the photorespiration process. Both reactions occur simultaneously and in competition at the same active site. The protein is Ribulose bisphosphate carboxylase large chain of Euglena anabaena (Euglenaria anabaena).